An 855-amino-acid polypeptide reads, in one-letter code: DNA mismatch repair protein MutS (855 aa).

616–623 (GPNMGGKS) lines the ATP pocket.

Belongs to the DNA mismatch repair MutS family.

Its function is as follows. This protein is involved in the repair of mismatches in DNA. It is possible that it carries out the mismatch recognition step. This protein has a weak ATPase activity. The chain is DNA mismatch repair protein MutS from Salmonella gallinarum (strain 287/91 / NCTC 13346).